The sequence spans 216 residues: CDP-diacylglycerol--glycerol-3-phosphate 3-phosphatidyltransferase (216 aa).

The next 4 helical transmembrane spans lie at 40 to 60 (VVSIASVLLFLFIACTDFLDG), 88 to 108 (VMLCLVADNFMPVFLFLCILY), 141 to 161 (MGAVLFSLLLKALYAFELAGA), and 176 to 196 (VVPVVLALASFFSYLKTFFPI).

The protein belongs to the CDP-alcohol phosphatidyltransferase class-I family.

The protein localises to the cell membrane. The enzyme catalyses a CDP-1,2-diacyl-sn-glycerol + sn-glycerol 3-phosphate = a 1,2-diacyl-sn-glycero-3-phospho-(1'-sn-glycero-3'-phosphate) + CMP + H(+). It functions in the pathway phospholipid metabolism; phosphatidylglycerol biosynthesis; phosphatidylglycerol from CDP-diacylglycerol: step 1/2. In terms of biological role, this protein catalyzes the committed step to the synthesis of the acidic phospholipids. The sequence is that of CDP-diacylglycerol--glycerol-3-phosphate 3-phosphatidyltransferase (pgsA) from Treponema pallidum (strain Nichols).